Reading from the N-terminus, the 24-residue chain is N-acyl-L-amino acid amidohydrolase (24 aa).

It belongs to the peptidase M20 family. Homotetramer. Co(2+) is required as a cofactor.

The catalysed reaction is an N-acyl-L-amino acid + H2O = an L-alpha-amino acid + a carboxylate. The enzyme catalyses an N-acetyl-L-cysteine-S-conjugate + H2O = an S-substituted L-cysteine + acetate. This is N-acyl-L-amino acid amidohydrolase from Parageobacillus thermoglucosidasius (Geobacillus thermoglucosidasius).